Here is a 231-residue protein sequence, read N- to C-terminus: Octanoyltransferase (231 aa).

The BPL/LPL catalytic domain maps to 49-227 (PHLPEAVWLL…ALAARFHLAW (179 aa)). Substrate contacts are provided by residues 91-98 (RGGEVTHH), 158-160 (AIG), and 171-173 (GLA). Catalysis depends on Cys-189, which acts as the Acyl-thioester intermediate.

The protein belongs to the LipB family.

The protein localises to the cytoplasm. It carries out the reaction octanoyl-[ACP] + L-lysyl-[protein] = N(6)-octanoyl-L-lysyl-[protein] + holo-[ACP] + H(+). It functions in the pathway protein modification; protein lipoylation via endogenous pathway; protein N(6)-(lipoyl)lysine from octanoyl-[acyl-carrier-protein]: step 1/2. Its function is as follows. Catalyzes the transfer of endogenously produced octanoic acid from octanoyl-acyl-carrier-protein onto the lipoyl domains of lipoate-dependent enzymes. Lipoyl-ACP can also act as a substrate although octanoyl-ACP is likely to be the physiological substrate. The protein is Octanoyltransferase of Parasynechococcus marenigrum (strain WH8102).